Reading from the N-terminus, the 476-residue chain is Sulfate adenylyltransferase subunit 1 (476 aa).

A tr-type G domain is found at 25-241 (KSLLRFLTCG…LETVEVQRVV (217 aa)). The tract at residues 34–41 (GSVDDGKS) is G1. 34–41 (GSVDDGKS) is a GTP binding site. Residues 92–96 (GITID) form a G2 region. Residues 113–116 (DTPG) form a G3 region. GTP is bound by residues 113 to 117 (DTPGH) and 168 to 171 (NKMD). The segment at 168-171 (NKMD) is G4. Positions 206–208 (SAL) are G5.

The protein belongs to the TRAFAC class translation factor GTPase superfamily. Classic translation factor GTPase family. CysN/NodQ subfamily. As to quaternary structure, heterodimer composed of CysD, the smaller subunit, and CysN.

The enzyme catalyses sulfate + ATP + H(+) = adenosine 5'-phosphosulfate + diphosphate. It functions in the pathway sulfur metabolism; hydrogen sulfide biosynthesis; sulfite from sulfate: step 1/3. In terms of biological role, with CysD forms the ATP sulfurylase (ATPS) that catalyzes the adenylation of sulfate producing adenosine 5'-phosphosulfate (APS) and diphosphate, the first enzymatic step in sulfur assimilation pathway. APS synthesis involves the formation of a high-energy phosphoric-sulfuric acid anhydride bond driven by GTP hydrolysis by CysN coupled to ATP hydrolysis by CysD. This is Sulfate adenylyltransferase subunit 1 from Erwinia tasmaniensis (strain DSM 17950 / CFBP 7177 / CIP 109463 / NCPPB 4357 / Et1/99).